The chain runs to 128 residues: Large ribosomal subunit protein bL19 (128 aa).

The protein belongs to the bacterial ribosomal protein bL19 family.

This protein is located at the 30S-50S ribosomal subunit interface and may play a role in the structure and function of the aminoacyl-tRNA binding site. This Ralstonia nicotianae (strain ATCC BAA-1114 / GMI1000) (Ralstonia solanacearum) protein is Large ribosomal subunit protein bL19.